The sequence spans 153 residues: Deoxyuridine 5'-triphosphate nucleotidohydrolase (153 aa).

Substrate contacts are provided by residues 65–67, Asn-78, and 82–84; these read RSG and TID. The disordered stretch occupies residues 132–153; it reads MTQRGEGGFGHTGISAVHPRTH.

It belongs to the dUTPase family. Requires Mg(2+) as cofactor.

The enzyme catalyses dUTP + H2O = dUMP + diphosphate + H(+). Its pathway is pyrimidine metabolism; dUMP biosynthesis; dUMP from dCTP (dUTP route): step 2/2. Its function is as follows. This enzyme is involved in nucleotide metabolism: it produces dUMP, the immediate precursor of thymidine nucleotides and it decreases the intracellular concentration of dUTP so that uracil cannot be incorporated into DNA. The protein is Deoxyuridine 5'-triphosphate nucleotidohydrolase of Chlorobium limicola (strain DSM 245 / NBRC 103803 / 6330).